Reading from the N-terminus, the 418-residue chain is Lysophosphatidic acid phosphatase type 6 (418 aa).

A mitochondrion-targeting transit peptide spans 1 to 25; the sequence is MRVWVPVGVLTSLAYCFHQRRVALA. A substrate binding region spans residues 51 to 161; sequence RHGARSPLKP…VFIRSTNMFR (111 aa). His52 serves as the catalytic Nucleophile. The Proton donor role is filled by Asp327.

This sequence belongs to the histidine acid phosphatase family. As to quaternary structure, monomer.

Its subcellular location is the mitochondrion. It catalyses the reaction a phosphate monoester + H2O = an alcohol + phosphate. The catalysed reaction is 1-(9Z-octadecenoyl)-sn-glycero-3-phosphate + H2O = 1-(9Z-octadecenoyl)-sn-glycerol + phosphate. Hydrolyzes lysophosphatidic acid (LPA) containing a medium length fatty acid chain to the corresponding monoacylglycerol. Has highest activity with lysophosphatidic acid containing myristate (C14:0), monounsaturated oleate (C18:1) or palmitate (C16:0), and lower activity with C18:0 and C6:0 lysophosphatidic acid. This chain is Lysophosphatidic acid phosphatase type 6 (Acp6), found in Mus musculus (Mouse).